We begin with the raw amino-acid sequence, 197 residues long: Phospholipid hydroperoxide glutathione peroxidase (197 aa).

Serine 40 is subject to Phosphoserine. The active site involves selenocysteine 73. Position 73 (selenocysteine 73) is a non-standard amino acid, selenocysteine.

It belongs to the glutathione peroxidase family. Monomer. Has a tendency to form higher mass oligomers. Interacts with FUNDC1; this interaction promotes GPX4 recruitment into mitochondria through TOM/TIM complex where it is degraded by mitophagy.

The protein localises to the mitochondrion. The protein resides in the cytoplasm. The catalysed reaction is a hydroperoxy polyunsaturated fatty acid + 2 glutathione = a hydroxy polyunsaturated fatty acid + glutathione disulfide + H2O. The enzyme catalyses 2 glutathione + H2O2 = glutathione disulfide + 2 H2O. It carries out the reaction tert-butyl hydroperoxide + 2 glutathione = tert-butanol + glutathione disulfide + H2O. It catalyses the reaction cumene hydroperoxide + 2 glutathione = 2-phenylpropan-2-ol + glutathione disulfide + H2O. The catalysed reaction is (9S)-hydroperoxy-(10E,12Z)-octadecadienoate + 2 glutathione = (9S)-hydroxy-(10E,12Z)-octadecadienoate + glutathione disulfide + H2O. The enzyme catalyses (13S)-hydroperoxy-(9Z,11E)-octadecadienoate + 2 glutathione = (13S)-hydroxy-(9Z,11E)-octadecadienoate + glutathione disulfide + H2O. It carries out the reaction (5S)-hydroperoxy-(6E,8Z,11Z,14Z)-eicosatetraenoate + 2 glutathione = (5S)-hydroxy-(6E,8Z,11Z,14Z)-eicosatetraenoate + glutathione disulfide + H2O. It catalyses the reaction (12R)-hydroperoxy-(5Z,8Z,10E,14Z)-eicosatetraenoate + 2 glutathione = (12R)-hydroxy-(5Z,8Z,10E,14Z)-eicosatetraenoate + glutathione disulfide + H2O. The catalysed reaction is (12S)-hydroperoxy-(5Z,8Z,10E,14Z)-eicosatetraenoate + 2 glutathione = (12S)-hydroxy-(5Z,8Z,10E,14Z)-eicosatetraenoate + glutathione disulfide + H2O. The enzyme catalyses (15S)-hydroperoxy-(5Z,8Z,11Z,13E)-eicosatetraenoate + 2 glutathione = (15S)-hydroxy-(5Z,8Z,11Z,13E)-eicosatetraenoate + glutathione disulfide + H2O. It carries out the reaction (5S)-hydroperoxy-(6E,8Z,11Z,14Z,17Z)-eicosapentaenoate + 2 glutathione = (5S)-hydroxy-(6E,8Z,11Z,14Z,17Z)-eicosapentaenoate + glutathione disulfide + H2O. It catalyses the reaction (12S)-hydroperoxy-(5Z,8Z,10E,14Z,17Z)-eicosapentaenoate + 2 glutathione = (12S)-hydroxy-(5Z,8Z,10E,14Z,17Z)-eicosapentaenoate + glutathione disulfide + H2O. The catalysed reaction is (15S)-hydroperoxy-(5Z,8Z,11Z,13E,17Z)-eicosapentaenoate + 2 glutathione = (15S)-hydroxy-(5Z,8Z,11Z,13E,17Z)-eicosapentaenoate + glutathione disulfide + H2O. The enzyme catalyses (15S)-hydroperoxy-(11Z,13E)-eicosadienoate + 2 glutathione = (15S)-hydroxy-(11Z,13E)-eicosadienoate + glutathione disulfide + H2O. It carries out the reaction (17S)-hydroperoxy-(4Z,7Z,10Z,13Z,15E,19Z)-docosahexaenoate + 2 glutathione = (17S)-hydroxy-(4Z,7Z,10Z,13Z,15E,19Z)-docosahexaenoate + glutathione disulfide + H2O. It catalyses the reaction a hydroperoxy-1,2-diacyl-glycero-3-phosphocholine + 2 glutathione = a hydroxy-1,2-diacyl-glycero-3-phosphocholine + glutathione disulfide + H2O. In terms of biological role, essential antioxidant peroxidase that directly reduces phospholipid hydroperoxide even if they are incorporated in membranes and lipoproteins. Can also reduce fatty acid hydroperoxide, cholesterol hydroperoxide and thymine hydroperoxide. Plays a key role in protecting cells from oxidative damage by preventing membrane lipid peroxidation. Required to prevent cells from ferroptosis, a non-apoptotic cell death resulting from an iron-dependent accumulation of lipid reactive oxygen species. The presence of selenocysteine (Sec) versus Cys at the active site is essential for life: it provides resistance to overoxidation and prevents cells against ferroptosis. The presence of Sec at the active site is also essential for the survival of a specific type of parvalbumin-positive interneurons, thereby preventing against fatal epileptic seizures. May be required to protect cells from the toxicity of ingested lipid hydroperoxides. Required for normal sperm development and male fertility. Essential for maturation and survival of photoreceptor cells. Plays a role in a primary T-cell response to viral and parasitic infection by protecting T-cells from ferroptosis and by supporting T-cell expansion. Plays a role of glutathione peroxidase in platelets in the arachidonic acid metabolism. Reduces hydroperoxy ester lipids formed by a 15-lipoxygenase that may play a role as down-regulator of the cellular 15-lipoxygenase pathway. Can also reduce small soluble hydroperoxides such as H2O2, cumene hydroperoxide and tert-butyl hydroperoxide. The polypeptide is Phospholipid hydroperoxide glutathione peroxidase (Bos taurus (Bovine)).